The primary structure comprises 723 residues: Preterminal protein (723 aa).

A Nuclear localization signal motif is present at residues 453–462 (RLPMRRRRRR). The tract at residues 457 to 492 (RRRRRRAPPPPPMSEELSEPEVEAFPPASPPRRSFE) is disordered. O-(5'-phospho-DNA)-serine is present on S651.

The protein belongs to the adenoviridae terminal protein family. As to quaternary structure, heterodimer with the polymerase; this heterodimer binds to bp 9 to 18 of the genome. Interacts with host POU2F1; POU2F1 binds to the auxiliary sequences in the inverted terminal repeats and tethers the pTP-POL heterodimer to the origin DNA thereby participating in the assembly of the pre-initiation complex (POL-TP-DBP-NFIA-POU2F1). Preterminal protein is used to replicate viral genome, upon genomic encapsidation it is processed first into iTP and finally into TP by adenovirus protease.

It localises to the host nucleus matrix. Functionally, protein covalently bound to the viral DNA that acts as a primer for viral genomic replication by DNA strand displacement. Assembles on the viral origin of replication in an initiation complex with viral polymerase, DBP, host NFIA and host POU2F1/OCT1. During initiation, the polymerase covalently couples the first dCTP with Ser-580 of pTP. The terminal protein stimulates the template activity over 20 fold compared to protein-free templates. Neo-synthesized viral genomes are linked to two preterminal proteins, one for each 5' end. These new genomes are encapsidated in the nucleus, and during capsid maturation by viral protease, preterminal protein is first cleaved into intermediary (iTP), then into mature TP. May play a role in host nuclear matrix localization of genomic DNA. The polypeptide is Preterminal protein (Canis lupus familiaris (Dog)).